A 268-amino-acid polypeptide reads, in one-letter code: Shikimate dehydrogenase (NADP(+)) (268 aa).

Shikimate-binding positions include 13-15 (SLS) and Thr60. Lys64 functions as the Proton acceptor in the catalytic mechanism. Glu76 contributes to the NADP(+) binding site. 2 residues coordinate shikimate: Asn85 and Asp100. NADP(+) contacts are provided by residues 124–128 (GAGGA), 148–153 (NRTMAR), and Ile209. Tyr211 is a shikimate binding site. Residue Gly232 coordinates NADP(+).

The protein belongs to the shikimate dehydrogenase family. As to quaternary structure, homodimer.

It catalyses the reaction shikimate + NADP(+) = 3-dehydroshikimate + NADPH + H(+). The protein operates within metabolic intermediate biosynthesis; chorismate biosynthesis; chorismate from D-erythrose 4-phosphate and phosphoenolpyruvate: step 4/7. In terms of biological role, involved in the biosynthesis of the chorismate, which leads to the biosynthesis of aromatic amino acids. Catalyzes the reversible NADPH linked reduction of 3-dehydroshikimate (DHSA) to yield shikimate (SA). The chain is Shikimate dehydrogenase (NADP(+)) from Staphylococcus aureus (strain JH1).